Here is a 196-residue protein sequence, read N- to C-terminus: ATP-dependent Clp protease proteolytic subunit (196 aa).

Ser-101 serves as the catalytic Nucleophile. His-126 is a catalytic residue.

Belongs to the peptidase S14 family. Component of the chloroplastic Clp protease core complex.

The protein localises to the plastid. It is found in the chloroplast stroma. It carries out the reaction Hydrolysis of proteins to small peptides in the presence of ATP and magnesium. alpha-casein is the usual test substrate. In the absence of ATP, only oligopeptides shorter than five residues are hydrolyzed (such as succinyl-Leu-Tyr-|-NHMec, and Leu-Tyr-Leu-|-Tyr-Trp, in which cleavage of the -Tyr-|-Leu- and -Tyr-|-Trp bonds also occurs).. In terms of biological role, cleaves peptides in various proteins in a process that requires ATP hydrolysis. Has a chymotrypsin-like activity. Plays a major role in the degradation of misfolded proteins. The chain is ATP-dependent Clp protease proteolytic subunit from Atropa belladonna (Belladonna).